The primary structure comprises 443 residues: Probable nitrate/nitrite antiporter NarK1 (443 aa).

The next 12 membrane-spanning stretches (helical) occupy residues 23–43 (TLAF…GVPI), 56–76 (WISA…GILA), 79–99 (YGGR…AYLV), 108–128 (LLLY…GIAW), 142–164 (LGVF…ALIA), 182–202 (FIPF…WFGT), 230–250 (FSLY…WLPK), 255–275 (VFGL…FPAS), 298–318 (FGII…IVLY), 329–349 (FTMG…GMGI), 368–388 (AVGG…PPLF), and 401–421 (TFFV…LTVL).

It belongs to the major facilitator superfamily. Nitrate/nitrite porter (TC 2.A.1.8) family.

The protein localises to the cell membrane. It carries out the reaction nitrate(in) + nitrite(out) = nitrate(out) + nitrite(in). In terms of biological role, probable nitrate/nitrite antiporter that may be involved in nitrate import and nitrite export during anaerobic growth. The sequence is that of Probable nitrate/nitrite antiporter NarK1 from Thermus thermophilus.